Consider the following 405-residue polypeptide: MVSLIILFRLTFAIANRVRTLMKVLVIVSFFVLTGSASADSGALSLSGAAEALCNASKRLKSVYAFVQAKTKYATEKVREFEDMVELVRLKIVRVRGNEGGNGNWTSCTGIAKFLKRVGSKVNRVKRRELKRLRYLGYSAVGAAGIAAGRLDEMINVWRRAYSSGKGDFCVGNSEHHATRNQLLNCYLSDSEKDEFISLGDMHRMERVEEMNMTRESMNELLRLTGGGGNPLERYVHSANCHLTNTRPGGGYLSENSTSRRILWGDGIISLKRSGRGFVGGTGKTRAEVLIHDVTWEEDPVNNVPVLRNAYRELRKFVNLYAYIEELAHETGAHWNWEYAQAIVNTGTHGNKSTVVVDEDSGKSFVVLGNRETVQEEKLLEEMAICGVGRADSLRRTLALLFLLF.

A signal peptide spans 1–50 (MVSLIILFRLTFAIANRVRTLMKVLVIVSFFVLTGSASADSGALSLSGAA). Residues Asn-55, Asn-104, Asn-256, and Asn-351 are each glycosylated (N-linked (GlcNAc...) asparagine). Ala-391 carries GPI-anchor amidated alanine lipidation. Positions 392–405 (DSLRRTLALLFLLF) are cleaved as a propeptide — removed in mature form.

It localises to the cell membrane. The polypeptide is Protein PAG1 (PAG1) (Trypanosoma brucei brucei).